The chain runs to 347 residues: Elongation factor Ts (347 aa).

The interval 80-83 (TDFV) is involved in Mg(2+) ion dislocation from EF-Tu.

It belongs to the EF-Ts family.

The protein localises to the cytoplasm. Associates with the EF-Tu.GDP complex and induces the exchange of GDP to GTP. It remains bound to the aminoacyl-tRNA.EF-Tu.GTP complex up to the GTP hydrolysis stage on the ribosome. The polypeptide is Elongation factor Ts (Streptococcus gordonii (strain Challis / ATCC 35105 / BCRC 15272 / CH1 / DL1 / V288)).